Reading from the N-terminus, the 303-residue chain is MKGKEEKEGGARLGAGGGSPEKSPSAQELKEQGNRLFVGRKYPEAAACYGRAITRNPLVAVYYTNRALCYLKMQQHEQALADCRRALELDGQSVKAHFFLGQCQLEMESYDEAIANLQRAYSLAKEQRLNFGDDIPSALRIAKKKRWNSIEERRIHQESELHSYLSRLIAAERERELEECQRNHEGDEDDSHVRAQQACIEAKHDKYMADMDELFSQVDEKRKKRDIPDYLCGKISFELMREPCITPSGITYDRKDIEEHLQRVGHFDPVTRSPLTQEQLIPNLAMKEVIDAFISENGWVEDY.

Residues 1–10 (MKGKEEKEGG) show a composition bias toward basic and acidic residues. The tract at residues 1–30 (MKGKEEKEGGARLGAGGGSPEKSPSAQELK) is disordered. K2 participates in a covalent cross-link: Glycyl lysine isopeptide (Lys-Gly) (interchain with G-Cter in ubiquitin). Residue S19 is modified to Phosphoserine. K22 is covalently cross-linked (Glycyl lysine isopeptide (Lys-Gly) (interchain with G-Cter in ubiquitin)). Phosphoserine is present on residues S23 and S25. TPR repeat units lie at residues 26 to 59 (AQEL…NPLV), 60 to 93 (AVYY…DGQS), and 95 to 127 (KAHF…AKEQ). The segment at 101-200 (GQCQLEMESY…SHVRAQQACI (100 aa)) is required for interaction with MAPK7. The segment at 142–196 (AKKKRWNSIEERRIHQESELHSYLSRLIAAERERELEECQRNHEGDEDDSHVRAQ) is required for interaction with and ubiquitination of MYOCD. The segment at 143–197 (KKKRWNSIEERRIHQESELHSYLSRLIAAERERELEECQRNHEGDEDDSHVRAQQ) is required for interaction with FOXO1. The tract at residues 143 to 303 (KKKRWNSIEE…ISENGWVEDY (161 aa)) is required for ubiquitination of FOXO1. S149 carries the phosphoserine modification. Residues K221 and K255 each participate in a glycyl lysine isopeptide (Lys-Gly) (interchain with G-Cter in ubiquitin) cross-link. In terms of domain architecture, U-box spans 226-300 (DIPDYLCGKI…DAFISENGWV (75 aa)). S273 carries the post-translational modification Phosphoserine.

As to quaternary structure, homodimer. Interacts with BAG2. Interacts with E2 ubiquitin conjugating enzymes UBE2D1, UBE2D2 and UBE2D3. Detected in a ternary complex containing STUB1, HSPA1A and HSPBP1. Part of a complex composed of STUB1/CHIP, VCP/p97, CHRNA3, and UBXN2A that modulates the ubiquitination and endoplasmic reticulum-associated degradation (ERAD) of CHRNA3. Within the complex UBXN2A acts as a scaffold protein required for the interaction of CHRNA3 with VCP/p97, this interaction also inhibits CHRNA3 ubiquitination by STUB1/CHIP and subsequently ERAD. Interacts with MKKS. Interacts with DNAAF4. Interacts (when monoubiquitinated) with ATXN3. Interacts with UBE2W. Interacts (via the U-box domain) with the UBE2V2-UBE2N heterodimer; the complex has a specific 'Lys-63'-linked polyubiquitination activity. Interacts with DNAJB6. Interacts with FLCN. Interacts with HSP90AA1. Interacts with HSP90. Interacts with UBE2N and UBE2V1. Interacts (via TPR repeats) with HSPA8 (via C-terminus). Interacts (via TPR repeats) with HSPA1A (via C-terminus). Interacts with the non-acetylated form of HSPA1A and HSPA1B. Interacts with SMAD3 and HSP90AB1. Interacts with UBE4B. Interacts with PRMT5. Interacts with MYOCD (via C-terminus). Interacts with FOXO1 (when phosphorylated on 'Ser-256'). Interacts with MAPK7/ERK5; the interaction is enhanced in the presence of IGF1 or MAP2K5 and promotes STUB1/CHIP E3 ligase activity. Interacts with and ubiquitinates ESR1; the interaction is promoted in the absence of estradiol (17-beta-estradiol/E2). Interacts with ESR2. Interacts with and ubiquitinates NFATC3; HSPA1A/HSP70 is required as a co-chaperone. In macrophages, interacts with PAQR3; the interaction promotes PPARG poylubiquitination and STUB1-mediated degradation. Component of the chaperone-assisted selective autophagy (CASA) complex consisting of BAG3, HSPA8/HSC70, HSPB8 and STUB1/CHIP. Post-translationally, monoubiquitinated at Lys-2 following cell stress by UBE2W, promoting the interaction with ATXN3. Auto-ubiquitinated; mediated by UBE2D1 and UBE2D2 and enhanced in the presence of MAP2K5. In terms of tissue distribution, expressed in differentiated myotubes (at protein level). Highly expressed in skeletal muscle, heart, pancreas, brain and placenta. Detected in kidney, liver and lung.

It localises to the cytoplasm. The protein localises to the nucleus. Its subcellular location is the mitochondrion. The enzyme catalyses S-ubiquitinyl-[E2 ubiquitin-conjugating enzyme]-L-cysteine + [acceptor protein]-L-lysine = [E2 ubiquitin-conjugating enzyme]-L-cysteine + N(6)-ubiquitinyl-[acceptor protein]-L-lysine.. It functions in the pathway protein modification; protein ubiquitination. E3 ubiquitin-protein ligase which targets misfolded chaperone substrates towards proteasomal degradation. Plays a role in the maintenance of mitochondrial morphology and promotes mitophagic removal of dysfunctional mitochondria; thereby acts as a protector against apoptosis in response to cellular stress. Negatively regulates vascular smooth muscle contraction, via degradation of the transcriptional activator MYOCD and subsequent loss of transcription of genes involved in vascular smooth muscle contraction. Promotes survival and proliferation of cardiac smooth muscle cells via ubiquitination and degradation of FOXO1, resulting in subsequent repression of FOXO1-mediated transcription of pro-apoptotic genes. Ubiquitinates ICER-type isoforms of CREM and targets them for proteasomal degradation, thereby acts as a positive effector of MAPK/ERK-mediated inhibition of apoptosis in cardiomyocytes. Inhibits lipopolysaccharide-induced apoptosis and hypertrophy in cardiomyocytes, via ubiquitination and subsequent proteasomal degradation of NFATC3. Collaborates with ATXN3 in the degradation of misfolded chaperone substrates: ATXN3 restricting the length of ubiquitin chain attached to STUB1/CHIP substrates and preventing further chain extension. Ubiquitinates NOS1 in concert with Hsp70 and Hsp40. Modulates the activity of several chaperone complexes, including Hsp70, Hsc70 and Hsp90. Ubiquitinates CHRNA3 targeting it for endoplasmic reticulum-associated degradation in cortical neurons, as part of the STUB1-VCP-UBXN2A complex. Ubiquitinates and promotes ESR1 proteasomal degradation in response to age-related circulating estradiol (17-beta-estradiol/E2) decline, thereby promotes neuronal apoptosis in response to ischemic reperfusion injury. Mediates transfer of non-canonical short ubiquitin chains to HSPA8 that have no effect on HSPA8 degradation. Mediates polyubiquitination of DNA polymerase beta (POLB) at 'Lys-41', 'Lys-61' and 'Lys-81', thereby playing a role in base-excision repair: catalyzes polyubiquitination by amplifying the HUWE1/ARF-BP1-dependent monoubiquitination and leading to POLB-degradation by the proteasome. Mediates polyubiquitination of CYP3A4. Ubiquitinates EPHA2 and may regulate the receptor stability and activity through proteasomal degradation. Acts as a co-chaperone for HSPA1A and HSPA1B chaperone proteins and promotes ubiquitin-mediated protein degradation. Negatively regulates the suppressive function of regulatory T-cells (Treg) during inflammation by mediating the ubiquitination and degradation of FOXP3 in a HSPA1A/B-dependent manner. Catalyzes monoubiquitination of SIRT6, preventing its degradation by the proteasome. Likely mediates polyubiquitination and down-regulates plasma membrane expression of PD-L1/CD274, an immune inhibitory ligand critical for immune tolerance to self and antitumor immunity. Negatively regulates TGF-beta signaling by modulating the basal level of SMAD3 via ubiquitin-mediated degradation. Plays a role in the degradation of TP53. Mediates ubiquitination of RIPK3 leading to its subsequent proteasome-dependent degradation. May regulate myosin assembly in striated muscles together with UBE4B and VCP/p97 by targeting myosin chaperone UNC45B for proteasomal degradation. Ubiquitinates PPARG in macrophages playing a role in M2 macrophages polarization and angiogenesis. This is E3 ubiquitin-protein ligase CHIP from Homo sapiens (Human).